The following is a 369-amino-acid chain: Somatostatin receptor type 2 (369 aa).

At 1–43 the chain is on the extracellular side; it reads MDMAYELLNGSQPWLSSPFDLNGSVATANSSNQTEPYYDLTSN. 4 N-linked (GlcNAc...) asparagine glycosylation sites follow: Asn-9, Asn-22, Asn-29, and Asn-32. A helical membrane pass occupies residues 44–67; the sequence is AVLTFIYFVVCIIGLCGNTLVIYV. Topologically, residues 68-78 are cytoplasmic; the sequence is ILRYAKMKTIT. The chain crosses the membrane as a helical span at residues 79–103; it reads NIYILNLAIADELFMLGLPFLAMQV. At 104–118 the chain is on the extracellular side; that stretch reads ALVHWPFGKAICRVV. Cys-115 and Cys-193 form a disulfide bridge. Residues 119–138 form a helical membrane-spanning segment; that stretch reads MTVDGINQFTSIFCLTVMSI. Residues 139 to 161 are Cytoplasmic-facing; sequence DRYLAVVHPIKSAKWRRPRTAKM. Residues 162–181 traverse the membrane as a helical segment; the sequence is INVAVWGVSLLVILPIMIYA. The Extracellular segment spans residues 182-207; it reads GLRSNQWGRSSCTINWPGESGAWYTG. The chain crosses the membrane as a helical span at residues 208 to 229; sequence FIIYAFILGFLVPLTIICLCYL. Residues 230–253 lie on the Cytoplasmic side of the membrane; sequence FIIIKVKSSGIRVGSSKRKKSEKK. The helical transmembrane segment at 254 to 278 threads the bilayer; the sequence is VTRMVSIVVAVFIFCWLPFYIFNVS. The Extracellular segment spans residues 279–288; the sequence is SVSVAISPTP. The helical transmembrane segment at 289-303 threads the bilayer; the sequence is ALKGMFDFVVVLTYA. At 304–369 the chain is on the cytoplasmic side; sequence NSCANPILYA…LLNGDLQTSI (66 aa). Cys-328 is lipidated: S-palmitoyl cysteine. Phosphoserine is present on residues Ser-341, Ser-343, and Ser-348. Residues Thr-353 and Thr-354 each carry the phosphothreonine modification.

The protein belongs to the G-protein coupled receptor 1 family. As to quaternary structure, homodimer and heterodimer with SSTR3 and SSTR5. Heterodimerization with SSTR3 inactivates SSTR3 receptor function. Heterodimerization with SSTR5 is enhanced by agonist stimulation of SSTR2 and increases SSTR2 cell growth inhibition activity. Following agonist stimulation, homodimers dissociate into monomers which is required for receptor internalization. Interacts with beta-arrestin; this interaction is necessary for receptor internalization and is destabilized by heterodimerization with SSTR5 which results in increased recycling of SSTR2 to the cell surface. Interacts (via C-terminus) with SHANK1 (via PDZ domain). Phosphorylated on serine and threonine residues in response to agonist stimulation, leading to receptor desensitization and rapid internalization. Phosphorylated to a greater extent on serine than threonine residues. Threonine phosphorylation is required for arrestin binding and receptor endocytosis but is not necessary for desensitization.

It is found in the cell membrane. The protein localises to the cytoplasm. Functionally, receptor for somatostatin-14 and -28. This receptor is coupled via pertussis toxin sensitive G proteins to inhibition of adenylyl cyclase. In addition it stimulates phosphotyrosine phosphatase and PLC via pertussis toxin insensitive as well as sensitive G proteins. Inhibits calcium entry by suppressing voltage-dependent calcium channels. Acts as the functionally dominant somatostatin receptor in pancreatic alpha- and beta-cells where it mediates the inhibitory effect of somatostatin-14 on hormone secretion. Inhibits cell growth through enhancement of MAPK1 and MAPK2 phosphorylation and subsequent up-regulation of CDKN1B. Stimulates neuronal migration and axon outgrowth and may participate in neuron development and maturation during brain development. Mediates negative regulation of insulin receptor signaling through PTPN6. Inactivates SSTR3 receptor function following heterodimerization. The chain is Somatostatin receptor type 2 (SSTR2) from Sus scrofa (Pig).